Reading from the N-terminus, the 144-residue chain is MDIHEILKYLPHRYPLILVDRVVSLELGKRIHAYKNVSINEPYFSGHFPHHPVMPGVLIVEALAQAAALLTIRSENMEKDAGQVYYFVGIDGVRFKKPVIAGDQLVLKVEITRQLKGIWKYSACAEVDGQLVTEAQLMCTARAI.

Histidine 47 is a catalytic residue.

Belongs to the thioester dehydratase family. FabZ subfamily.

The protein resides in the cytoplasm. It carries out the reaction a (3R)-hydroxyacyl-[ACP] = a (2E)-enoyl-[ACP] + H2O. Involved in unsaturated fatty acids biosynthesis. Catalyzes the dehydration of short chain beta-hydroxyacyl-ACPs and long chain saturated and unsaturated beta-hydroxyacyl-ACPs. This Nitrosomonas eutropha (strain DSM 101675 / C91 / Nm57) protein is 3-hydroxyacyl-[acyl-carrier-protein] dehydratase FabZ.